Reading from the N-terminus, the 199-residue chain is MEPLKTHNGIAAVLNRINVDTDQIIPKQFLKRIERTGYGRFAFFDWRYLDNGDPNPDFELNRPEYKGASILIAGENFGCGSSREHAPWALDDYGFKIIIAPSFADIFHQNCFKNGMLPIRLPYEAWKELAEQYEYQSLTMTVDLEKQTITDHAGRQIAFEVDPHWKEMLLNGYDEISLTLLLEEEIEQFEKQRSSWLQA.

The protein belongs to the LeuD family. LeuD type 1 subfamily. Heterodimer of LeuC and LeuD.

It carries out the reaction (2R,3S)-3-isopropylmalate = (2S)-2-isopropylmalate. It participates in amino-acid biosynthesis; L-leucine biosynthesis; L-leucine from 3-methyl-2-oxobutanoate: step 2/4. In terms of biological role, catalyzes the isomerization between 2-isopropylmalate and 3-isopropylmalate, via the formation of 2-isopropylmaleate. The sequence is that of 3-isopropylmalate dehydratase small subunit from Bacillus licheniformis (strain ATCC 14580 / DSM 13 / JCM 2505 / CCUG 7422 / NBRC 12200 / NCIMB 9375 / NCTC 10341 / NRRL NRS-1264 / Gibson 46).